We begin with the raw amino-acid sequence, 416 residues long: MFSFYFNDNKITKLLMVGYGSTGKSVCDFLANFIDITVDISQNDDEFVNYDLNSYDLITVSPGIPLNKSPYRALTKFKDKIVSDIDIFYQYIKDTKAKTIAVTGSNGKSTVVTMTDFVLKDLGYKSILVGNIGTPALNKIGEKFDYCVVEVSSFQINLFNCVRFDLGCIINVSPDHLDRYQNFEQYKQSKLNLAKFSNDFFVYDVHNGIKYAGEYQIIRGAIYRNSTKLLDIVETKLFGEHNLENIIVVLNILDRLGLDINQAIDSIKKFKGLEHRCKIVKKVNGTTYINDSKGTNVGATIAALNSITNSKNIILLLGGVAKGGDFSLMIKSLDKYVKYVYIYGADKEYIESYIKGYCKYQLCNNMKQAFELASQKANSNEIVLLSPACASFDEFSGYAQRGEVFQNLVAQLEQKS.

Position 104-110 (104-110 (GSNGKST)) interacts with ATP.

Belongs to the MurCDEF family.

It localises to the cytoplasm. The enzyme catalyses UDP-N-acetyl-alpha-D-muramoyl-L-alanine + D-glutamate + ATP = UDP-N-acetyl-alpha-D-muramoyl-L-alanyl-D-glutamate + ADP + phosphate + H(+). It participates in cell wall biogenesis; peptidoglycan biosynthesis. In terms of biological role, cell wall formation. Catalyzes the addition of glutamate to the nucleotide precursor UDP-N-acetylmuramoyl-L-alanine (UMA). The protein is UDP-N-acetylmuramoylalanine--D-glutamate ligase of Francisella tularensis subsp. holarctica (strain FTNF002-00 / FTA).